We begin with the raw amino-acid sequence, 204 residues long: MVSLKTGILGGTFDPIHTGHLILAEEVKKRLGLDEIIFIPTGQPYYKADKTISPAADRLNMVKLAISGKPYFRVMDIEIKRSGPTYTADTLNDLKLILPEKTELYFILGWDNLEALPRWHKASEIIRLCQLVAVPRIGQAKPDVDELDDKLPGLQQSLIMLSKPEVDVSSSLVRERLENGQGVEHLVPEAVAAYIKEHGLYHRQ.

It belongs to the NadD family.

The catalysed reaction is nicotinate beta-D-ribonucleotide + ATP + H(+) = deamido-NAD(+) + diphosphate. The protein operates within cofactor biosynthesis; NAD(+) biosynthesis; deamido-NAD(+) from nicotinate D-ribonucleotide: step 1/1. Catalyzes the reversible adenylation of nicotinate mononucleotide (NaMN) to nicotinic acid adenine dinucleotide (NaAD). This is Probable nicotinate-nucleotide adenylyltransferase from Dehalococcoides mccartyi (strain ATCC BAA-2266 / KCTC 15142 / 195) (Dehalococcoides ethenogenes (strain 195)).